We begin with the raw amino-acid sequence, 158 residues long: C-type lectin BfL-2 (158 aa).

Residues 1-21 (MGHFTFIGLCLLAMFLSLSGA) form the signal peptide. Disulfide bonds link C26-C37, C54-C154, C61-C156, and C129-C146. The C-type lectin domain occupies 33-155 (KNGLCYKVFS…CETLHPFICQ (123 aa)). The Mannose-binding motif lies at 119-121 (EPN). Residue N121 is glycosylated (N-linked (GlcNAc...) asparagine). Positions 127, 142, and 143 each coordinate Ca(2+).

Belongs to the true venom lectin family. As to quaternary structure, homodimer; non-covalently linked. Expressed by the venom gland.

It is found in the secreted. Its function is as follows. Mannose-binding lectin which recognizes specific carbohydrate structures and agglutinates a variety of animal cells by binding to cell-surface glycoproteins and glycolipids. May be a calcium-dependent lectin. This chain is C-type lectin BfL-2, found in Bungarus fasciatus (Banded krait).